Reading from the N-terminus, the 966-residue chain is Regulator of G-protein signaling 3 (966 aa).

One can recognise a PDZ domain in the interval 18-95 (QITIRRGKDG…EIILLVWRVV (78 aa)). The segment at 115-135 (THDLLSPPNKREKNCTHGAPV) is disordered. Position 167 is an omega-N-methylarginine (Arg167). 2 disordered regions span residues 403–618 (EADE…TGAV) and 637–704 (YSQL…RVQN). Composition is skewed to polar residues over residues 527-548 (PETSTSKDSPPGQGSSPTTELP) and 576-594 (SSASVQKRLPSQESPSSLG). Over residues 649 to 675 (GEDEDAEEGEEGGEGEEDEEDDTSDDN) the composition is skewed to acidic residues. Basic and acidic residues predominate over residues 676 to 686 (YGDRSEAKRSS). Phosphoserine is present on residues Ser712, Ser715, Ser747, and Ser776. The interval 806-830 (FRRRNESPGAQPASKTDKTTKSFKP) is disordered. The span at 820-830 (KTDKTTKSFKP) shows a compositional bias: basic and acidic residues. The RGS domain occupies 841–966 (SLEKLLLHKY…INQKKMSPPL (126 aa)).

In terms of assembly, binds the GNB1-GNG2 heterodimer. Binds EFNB1 and EFNB2. Post-translationally, phosphorylated by cyclic GMP-dependent protein kinase. ISGylated. In terms of tissue distribution, detected in embryos from E8.5-16.5 in cortical ventricular zone, dorsal root ganglia and cerebellar primordia. Isoform 3 is detected in testis and in spermatocytes from newborn mice. Levels increase and reach a maximum after 21 days; after this they decrease again. Long isoforms are widely expressed.

The protein resides in the cytoplasm. It is found in the cell membrane. It localises to the nucleus. Down-regulates signaling from heterotrimeric G-proteins by increasing the GTPase activity of the alpha subunits, thereby driving them into their inactive GDP-bound form. Down-regulates G-protein-mediated release of inositol phosphates and activation of MAP kinases. The polypeptide is Regulator of G-protein signaling 3 (Rgs3) (Mus musculus (Mouse)).